Consider the following 269-residue polypeptide: MTVEQREASRLGPLFDSCRAENRAALIGYLPTGYPDVNTSVRAMTELVESGCDIVEVGVPYSDPGMDGPTIQRATEAALSGGVRVRDALTAVESISKAGGRAVVMTYWNPVLRYGVDAFARDLAAAGGHGLITPDLIPDEAQQWLAASDEHGLDRIFLVAPSSTPERLANTVAASRGFVYAASTMGVTGARDAVSNAAPDLVARVKAVSDIPVGVGLGVRSREQAAEIGRYADGVIVGSALVSALGDGLPSLRSLTEELAAGVRQRNSP.

Residues E56 and D67 each act as proton acceptor in the active site.

The protein belongs to the TrpA family. In terms of assembly, tetramer of two alpha and two beta chains.

The enzyme catalyses (1S,2R)-1-C-(indol-3-yl)glycerol 3-phosphate + L-serine = D-glyceraldehyde 3-phosphate + L-tryptophan + H2O. Its pathway is amino-acid biosynthesis; L-tryptophan biosynthesis; L-tryptophan from chorismate: step 5/5. In terms of biological role, the alpha subunit is responsible for the aldol cleavage of indoleglycerol phosphate to indole and glyceraldehyde 3-phosphate. The sequence is that of Tryptophan synthase alpha chain from Mycobacterium marinum (strain ATCC BAA-535 / M).